We begin with the raw amino-acid sequence, 512 residues long: RCC1 domain-containing protein DDB_G0279253 (512 aa).

RCC1 repeat units follow at residues 1 to 56, 58 to 134, 135 to 185, 197 to 248, 249 to 319, 321 to 384, 386 to 443, and 454 to 512; these read MKIY…MIID, GDLY…ACDN, NGNI…NNNN, SGGV…ALSS, ENDV…LLDI, FKNV…LLTN, DKLY…IQVY, and NNNI…FILP. Residues 66 to 77 are compositionally biased toward polar residues; sequence NDSGQLGINSNE. 2 disordered regions span residues 66 to 85 and 162 to 200; these read NDSG…QQQQ and STSN…SGGV. Low complexity predominate over residues 162 to 196; that stretch reads STSNNKNNNNNNNNNNNNNNNNNNNNNNNNNNNNN.

The chain is RCC1 domain-containing protein DDB_G0279253 from Dictyostelium discoideum (Social amoeba).